Reading from the N-terminus, the 264-residue chain is Short-chain dehydrogenase/reductase malC (264 aa).

Residues 13–35 (GKNVLIIGGTSGIGFAVAQLVIE) traverse the membrane as a helical segment. The NADP(+) site is built by Thr22, Ser23, Ile25, Ser45, Asn46, Lys49, Asp75, Asn88, Arg130, Val202, and Thr204. N-linked (GlcNAc...) asparagine glycosylation occurs at Asn249.

This sequence belongs to the short-chain dehydrogenases/reductases (SDR) family.

It localises to the membrane. The enzyme catalyses 1-hydroxy-3-{[2-(1,1-dimethylallyl)-indol-3-yl]methyl}-6H,7H,8H-5lambda(5)-pyrrolo[1,2-a]pyrazine + NADPH + H(+) = 1-hydroxy-3-{[2-(1,1-dimethylallyl)-indol-3-yl]methyl}-4H,6H,7H,8H-pyrrolo[1,2-a]pyrazine + NADP(+). It carries out the reaction 1-hydroxy-3-{[2-(1,1-dimethylallyl)-indol-3-yl]methyl}-4H,6H,7H,8H-pyrrolo[1,2-a]pyrazine = (+)-premalbrancheamide. It participates in alkaloid biosynthesis. Short-chain dehydrogenase/reductase; part of the gene cluster that mediates the biosynthesis of malbrancheamide, a dichlorinated fungal indole alkaloid that belongs to a family of natural products containing a characteristic bicyclo[2.2.2]diazaoctane core. The first step of malbrancheamide biosynthesis involves coupling of L-proline and L-tryptophan by malG, a bimodular NRPS, to produce L-Pro-L-Trp aldehyde through reductive offloading. This compound undergoes spontaneous cyclization and dehydration to give a dienamine which is reverse prenylated at C-2 by malE. The other prenyltransferase present in the cluster, malB, displays modest activity, suggesting that may be a redundant gene in the pathway. Subsequently, a [4+2] Diels-Alder cyclo-addition catalyzed by the bifunctional enzyme malC forms the characteristic bicyclo[2.2.2]diazaoctane ring of premalbrancheamid. The first reaction catalyzed is a NADPH-dependent reduction reaction in which the nicotinamide cofactor is a stoichiometric reagent. Either NADH or NADPH is effective as a cofactor. NADP(+) is required for stereocontrolled formation of premalbrancheamide, however it does not appear to be required as a formal stoichiometric reagent because the second reaction performed by malC, the [4+2] cycloaddition, is a balanced chemical reaction without requirement for hydride transfer to balance the reaction. Finally, the flavin-dependent halogenase malA catalyzes the iterative dichlorination of the indole ring of premalbrancheamide to yield C-9 monochlorinated malbrancheamide B, C-8 monochlorinated isomalbrancheamide B, and dichlorinated malbrancheamide. MalA is also able to brominate premalbrancheamide at C-9 to yield malbrancheamide C, and, to a lesser extend, at C-8 to yield isomalbrancheamide C. Finally, malA can brominate C-9 monochlorinated malbrancheamide B at C-8 to yield malbrancheamide D, or C-8 monochlorinated isomalbrancheamide B at C-9 to produce isomalbrancheamide D. This chain is Short-chain dehydrogenase/reductase malC, found in Malbranchea aurantiaca.